Consider the following 203-residue polypeptide: Cell division protein SepF (203 aa).

Disordered regions lie at residues 26-51 and 167-203; these read DGEL…RRGQ and GTAS…WRNQ. Composition is skewed to basic and acidic residues over residues 39–50 and 183–203; these read EPPRRSAPERRG and RRSE…WRNQ.

This sequence belongs to the SepF family. As to quaternary structure, homodimer. Interacts with FtsZ.

It is found in the cytoplasm. Its function is as follows. Cell division protein that is part of the divisome complex and is recruited early to the Z-ring. Probably stimulates Z-ring formation, perhaps through the cross-linking of FtsZ protofilaments. Its function overlaps with FtsA. The polypeptide is Cell division protein SepF (Symbiobacterium thermophilum (strain DSM 24528 / JCM 14929 / IAM 14863 / T)).